The primary structure comprises 423 residues: Serine hydroxymethyltransferase (423 aa).

(6S)-5,6,7,8-tetrahydrofolate contacts are provided by residues Leu120 and 124–126 (GHL). N6-(pyridoxal phosphate)lysine is present on Lys229. 353–355 (SPF) is a (6S)-5,6,7,8-tetrahydrofolate binding site.

It belongs to the SHMT family. In terms of assembly, homodimer. Pyridoxal 5'-phosphate serves as cofactor.

Its subcellular location is the cytoplasm. It carries out the reaction (6R)-5,10-methylene-5,6,7,8-tetrahydrofolate + glycine + H2O = (6S)-5,6,7,8-tetrahydrofolate + L-serine. It functions in the pathway one-carbon metabolism; tetrahydrofolate interconversion. Its pathway is amino-acid biosynthesis; glycine biosynthesis; glycine from L-serine: step 1/1. Functionally, catalyzes the reversible interconversion of serine and glycine with tetrahydrofolate (THF) serving as the one-carbon carrier. This reaction serves as the major source of one-carbon groups required for the biosynthesis of purines, thymidylate, methionine, and other important biomolecules. Also exhibits THF-independent aldolase activity toward beta-hydroxyamino acids, producing glycine and aldehydes, via a retro-aldol mechanism. The sequence is that of Serine hydroxymethyltransferase from Synechococcus sp. (strain RCC307).